A 110-amino-acid chain; its full sequence is Urease subunit beta (110 aa).

This sequence belongs to the urease beta subunit family. Heterotrimer of UreA (gamma), UreB (beta) and UreC (alpha) subunits. Three heterotrimers associate to form the active enzyme.

The protein localises to the cytoplasm. The enzyme catalyses urea + 2 H2O + H(+) = hydrogencarbonate + 2 NH4(+). The protein operates within nitrogen metabolism; urea degradation; CO(2) and NH(3) from urea (urease route): step 1/1. The chain is Urease subunit beta from Pseudoalteromonas translucida (strain TAC 125).